A 419-amino-acid polypeptide reads, in one-letter code: L-rhamnose isomerase (419 aa).

3 residues coordinate Mn(2+): His-262, Asp-294, and Asp-296.

It belongs to the rhamnose isomerase family. In terms of assembly, homotetramer. Mn(2+) serves as cofactor.

The protein localises to the cytoplasm. It catalyses the reaction L-rhamnopyranose = L-rhamnulose. Its pathway is carbohydrate degradation; L-rhamnose degradation; glycerone phosphate from L-rhamnose: step 1/3. Catalyzes the interconversion of L-rhamnose and L-rhamnulose. This Escherichia coli O17:K52:H18 (strain UMN026 / ExPEC) protein is L-rhamnose isomerase.